The sequence spans 181 residues: MINGLKNYSQDALRAARYIGQGFFVTLDHMNRTPITIQYPYEKLIPSERFRGRIHFEFDKCIACEVCVRVCPINLPVVDWEFQKSMKKKQLKSYSIDFGVCIFCGNCVEFCPTNCLSMTEEYELSSYDRHELNYDQVALGRLPNPASKDPLVHPILGLGYLQKKLLTQSTESKTITNFDKS.

2 4Fe-4S ferredoxin-type domains span residues 52–81 and 92–121; these read GRIH…VDWE and KSYS…MTEE. Positions 61, 64, 67, 71, 101, 104, 107, and 111 each coordinate [4Fe-4S] cluster.

Belongs to the complex I 23 kDa subunit family. NDH is composed of at least 16 different subunits, 5 of which are encoded in the nucleus. [4Fe-4S] cluster is required as a cofactor.

It localises to the plastid. The protein resides in the chloroplast thylakoid membrane. The enzyme catalyses a plastoquinone + NADH + (n+1) H(+)(in) = a plastoquinol + NAD(+) + n H(+)(out). The catalysed reaction is a plastoquinone + NADPH + (n+1) H(+)(in) = a plastoquinol + NADP(+) + n H(+)(out). Functionally, NDH shuttles electrons from NAD(P)H:plastoquinone, via FMN and iron-sulfur (Fe-S) centers, to quinones in the photosynthetic chain and possibly in a chloroplast respiratory chain. The immediate electron acceptor for the enzyme in this species is believed to be plastoquinone. Couples the redox reaction to proton translocation, and thus conserves the redox energy in a proton gradient. This chain is NAD(P)H-quinone oxidoreductase subunit I, chloroplastic, found in Staurastrum punctulatum (Green alga).